We begin with the raw amino-acid sequence, 825 residues long: Exocyst complex component SEC10a (825 aa).

The stretch at 244-266 (RGLEVAVANLQDYCNELENRLLS) forms a coiled coil.

The protein belongs to the SEC10 family. The exocyst complex is composed of SEC3, SEC5, SEC6, SEC8, SEC10, EXO70A1 and EXO84B. Interacts with EXO84B. Binds to EXO70E2. Binds directly to B1L. In terms of tissue distribution, expressed in seedlings, roots, leaves and flowers.

The protein localises to the cytoplasm. It localises to the cytosol. It is found in the secreted. Its subcellular location is the extracellular exosome. Functionally, component of the exocyst complex involved in the docking of exocytic vesicles with fusion sites on the plasma membrane during regulated or polarized secretion. Involved in polarized cell growth and organ morphogenesis. During cytokinesis, involved in cell plate initiation, cell plate maturation and formation of new primary cell wall. This is Exocyst complex component SEC10a from Arabidopsis thaliana (Mouse-ear cress).